Here is a 635-residue protein sequence, read N- to C-terminus: Threonine--tRNA ligase (635 aa).

The TGS domain maps to 1–61 (MVSIRLPDGS…DRDASLAIVT (61 aa)). The segment at 242-533 (DHRKLGKQLD…LIEHHAGAMP (292 aa)) is catalytic. 3 residues coordinate Zn(2+): C333, H384, and H510.

The protein belongs to the class-II aminoacyl-tRNA synthetase family. In terms of assembly, homodimer. The cofactor is Zn(2+).

The protein localises to the cytoplasm. The catalysed reaction is tRNA(Thr) + L-threonine + ATP = L-threonyl-tRNA(Thr) + AMP + diphosphate + H(+). In terms of biological role, catalyzes the attachment of threonine to tRNA(Thr) in a two-step reaction: L-threonine is first activated by ATP to form Thr-AMP and then transferred to the acceptor end of tRNA(Thr). Also edits incorrectly charged L-seryl-tRNA(Thr). This is Threonine--tRNA ligase from Burkholderia pseudomallei (strain 1106a).